We begin with the raw amino-acid sequence, 283 residues long: Probable aquaporin NIP4-2 (283 aa).

The residue at position 1 (Met1) is an N-acetylmethionine. Basic and acidic residues predominate over residues 1–21 (MTSHGEEIEDEQISRIEKGNC). The tract at residues 1-23 (MTSHGEEIEDEQISRIEKGNCKD) is disordered. Helical transmembrane passes span 51–71 (GTYF…LYGG) and 77–97 (GICV…GHIS). The short motif at 102-104 (NPA) is the NPA 1 element. Helical transmembrane passes span 120–140 (VPLY…TLRL), 161–181 (ALVA…GVAT), and 189–209 (LAGI…GPIS). The short motif at 214 to 216 (NPA) is the NPA 2 element. The chain crosses the membrane as a helical span at residues 231 to 251 (IWVYIVGPFVGIFAGGFVYNF). A Phosphoserine modification is found at Ser267.

The protein belongs to the MIP/aquaporin (TC 1.A.8) family. NIP (TC 1.A.8.12) subfamily.

Its subcellular location is the membrane. In terms of biological role, aquaporins facilitate the transport of water and small neutral solutes across cell membranes. The sequence is that of Probable aquaporin NIP4-2 (NIP4-2) from Arabidopsis thaliana (Mouse-ear cress).